A 120-amino-acid chain; its full sequence is Large ribosomal subunit protein uL29A (120 aa).

Serine 13 and serine 50 each carry phosphoserine.

This sequence belongs to the universal ribosomal protein uL29 family. In terms of assembly, component of the large ribosomal subunit (LSU). Mature yeast ribosomes consist of a small (40S) and a large (60S) subunit. The 40S small subunit contains 1 molecule of ribosomal RNA (18S rRNA) and 33 different proteins (encoded by 57 genes). The large 60S subunit contains 3 rRNA molecules (25S, 5.8S and 5S rRNA) and 46 different proteins (encoded by 81 genes). uL29 is associated with the polypeptide exit tunnel.

Its subcellular location is the cytoplasm. Functionally, component of the ribosome, a large ribonucleoprotein complex responsible for the synthesis of proteins in the cell. The small ribosomal subunit (SSU) binds messenger RNAs (mRNAs) and translates the encoded message by selecting cognate aminoacyl-transfer RNA (tRNA) molecules. The large subunit (LSU) contains the ribosomal catalytic site termed the peptidyl transferase center (PTC), which catalyzes the formation of peptide bonds, thereby polymerizing the amino acids delivered by tRNAs into a polypeptide chain. The nascent polypeptides leave the ribosome through a tunnel in the LSU and interact with protein factors that function in enzymatic processing, targeting, and the membrane insertion of nascent chains at the exit of the ribosomal tunnel. The chain is Large ribosomal subunit protein uL29A from Saccharomyces cerevisiae (strain ATCC 204508 / S288c) (Baker's yeast).